Consider the following 492-residue polypeptide: AAA-ATPase At3g28520 (492 aa).

The helical transmembrane segment at 7–25 (IWGFTSTTMASIMFLWPMY) threads the bilayer. 249–256 (GPPGTGKS) is a binding site for ATP. 2 disordered regions span residues 313-334 (KKKK…LKRV) and 462-492 (KIEK…MVTK). Composition is skewed to basic and acidic residues over residues 323 to 332 (EEKKEAENLK) and 462 to 484 (KIEK…EKQN).

Belongs to the AAA ATPase family. BCS1 subfamily. The cofactor is Mg(2+).

It is found in the membrane. It carries out the reaction ATP + H2O = ADP + phosphate + H(+). The polypeptide is AAA-ATPase At3g28520 (Arabidopsis thaliana (Mouse-ear cress)).